The sequence spans 270 residues: Protein-ADP-ribose hydrolase (270 aa).

The 195-residue stretch at 73 to 267 folds into the Macro domain; sequence VSVKDCQKTN…LYDTYLQKEN (195 aa). Positions 92, 93, and 106 each coordinate ADP-D-ribose. Residues cysteine 112, histidine 117, and cysteine 119 each contribute to the Zn(2+) site. The ADP-D-ribose site is built by cysteine 119, isoleucine 120, aspartate 121, serine 212, threonine 213, glycine 214, glutamate 215, and phenylalanine 216.

The protein belongs to the MacroD-type family. Zn-Macro subfamily. Zn(2+) serves as cofactor.

It carries out the reaction 4-O-(ADP-D-ribosyl)-L-aspartyl-[protein] + H2O = L-aspartyl-[protein] + ADP-D-ribose + H(+). In terms of biological role, ADP-ribosylhydrolase that specifically reverses the SirTM-mediated mono-ADP-ribosylation at an asparatate residue of GcvH-L, by releasing ADP-ribose from the target protein. May play a role in the regulation of the response to host-induced oxidative stress. The protein is Protein-ADP-ribose hydrolase of Streptococcus pyogenes serotype M18 (strain MGAS8232).